The following is a 283-amino-acid chain: Bifunctional protein FolD (283 aa).

Residues 166–168 and I232 contribute to the NADP(+) site; that span reads GAS.

This sequence belongs to the tetrahydrofolate dehydrogenase/cyclohydrolase family. In terms of assembly, homodimer.

The catalysed reaction is (6R)-5,10-methylene-5,6,7,8-tetrahydrofolate + NADP(+) = (6R)-5,10-methenyltetrahydrofolate + NADPH. It carries out the reaction (6R)-5,10-methenyltetrahydrofolate + H2O = (6R)-10-formyltetrahydrofolate + H(+). It participates in one-carbon metabolism; tetrahydrofolate interconversion. Catalyzes the oxidation of 5,10-methylenetetrahydrofolate to 5,10-methenyltetrahydrofolate and then the hydrolysis of 5,10-methenyltetrahydrofolate to 10-formyltetrahydrofolate. In Hamiltonella defensa subsp. Acyrthosiphon pisum (strain 5AT), this protein is Bifunctional protein FolD.